Reading from the N-terminus, the 161-residue chain is Bifurcating [FeFe] hydrogenase gamma subunit (161 aa).

[2Fe-2S] cluster-binding residues include Cys-78, Cys-83, Cys-119, and Cys-123.

This sequence belongs to the complex I 24 kDa subunit family. As to quaternary structure, heterotrimer composed of HydA (alpha subunit), HydB (beta subunit) and HydC (gamma subunit). Near neutral and acidic pH conditions favor oligomerization of the heterotrimeric holoenzyme. It depends on [2Fe-2S] cluster as a cofactor.

Its subcellular location is the cytoplasm. It catalyses the reaction 2 H2 + 2 oxidized [2Fe-2S]-[ferredoxin] + NAD(+) = 2 reduced [2Fe-2S]-[ferredoxin] + NADH + 3 H(+). Its function is as follows. Catalyzes the oxidation of the physiological electron carriers NADH and reduced ferredoxin, coupled to the production of H(2). Acts as a bifurcating [FeFe] hydrogenase, which uses the exergonic oxidation of reduced ferredoxin to drive the unfavorable oxidation of NADH to produce H(2). The gamma subunit might be the site where reduced ferredoxin is oxidized. The polypeptide is Bifurcating [FeFe] hydrogenase gamma subunit (Thermotoga maritima (strain ATCC 43589 / DSM 3109 / JCM 10099 / NBRC 100826 / MSB8)).